A 209-amino-acid chain; its full sequence is FMN-dependent NADH:quinone oxidoreductase 2 (209 aa).

17–19 (SAS) lines the FMN pocket.

The protein belongs to the azoreductase type 1 family. In terms of assembly, homodimer. Requires FMN as cofactor.

It carries out the reaction 2 a quinone + NADH + H(+) = 2 a 1,4-benzosemiquinone + NAD(+). The catalysed reaction is N,N-dimethyl-1,4-phenylenediamine + anthranilate + 2 NAD(+) = 2-(4-dimethylaminophenyl)diazenylbenzoate + 2 NADH + 2 H(+). Functionally, quinone reductase that provides resistance to thiol-specific stress caused by electrophilic quinones. Also exhibits azoreductase activity. Catalyzes the reductive cleavage of the azo bond in aromatic azo compounds to the corresponding amines. This is FMN-dependent NADH:quinone oxidoreductase 2 from Lactiplantibacillus plantarum (strain ATCC BAA-793 / NCIMB 8826 / WCFS1) (Lactobacillus plantarum).